A 119-amino-acid chain; its full sequence is Ribosome-binding factor A (119 aa).

The protein belongs to the RbfA family. As to quaternary structure, monomer. Binds 30S ribosomal subunits, but not 50S ribosomal subunits or 70S ribosomes.

It is found in the cytoplasm. Functionally, one of several proteins that assist in the late maturation steps of the functional core of the 30S ribosomal subunit. Associates with free 30S ribosomal subunits (but not with 30S subunits that are part of 70S ribosomes or polysomes). Required for efficient processing of 16S rRNA. May interact with the 5'-terminal helix region of 16S rRNA. This chain is Ribosome-binding factor A, found in Buchnera aphidicola subsp. Acyrthosiphon pisum (strain Tuc7).